The sequence spans 380 residues: tRNA(Met) cytidine acetate ligase (380 aa).

Residues 7-20, G100, N153, and R178 contribute to the ATP site; that span reads ITEYNPFHNGHLYH.

The protein belongs to the TmcAL family.

It localises to the cytoplasm. It catalyses the reaction cytidine(34) in elongator tRNA(Met) + acetate + ATP = N(4)-acetylcytidine(34) in elongator tRNA(Met) + AMP + diphosphate. Functionally, catalyzes the formation of N(4)-acetylcytidine (ac(4)C) at the wobble position of elongator tRNA(Met), using acetate and ATP as substrates. First activates an acetate ion to form acetyladenylate (Ac-AMP) and then transfers the acetyl group to tRNA to form ac(4)C34. The protein is tRNA(Met) cytidine acetate ligase of Staphylococcus haemolyticus (strain JCSC1435).